The sequence spans 34 residues: Phallacidin proprotein 1 (34 aa).

Residues 1–10 (MSDINATRLP) constitute a propeptide that is removed on maturation. The segment at residues 11–17 (AWLVDCP) is a cross-link (cyclopeptide (Ala-Pro)). The 2'-cysteinyl-6'-hydroxytryptophan sulfoxide (Trp-Cys) cross-link spans 12-16 (WLVDC). A propeptide spanning residues 18–34 (CVGDDVNRLLTRGESLC) is cleaved from the precursor.

Belongs to the MSDIN fungal toxin family. Processed by the macrocyclase-peptidase enzyme POPB to yield a toxic cyclic heptapeptide. POPB first removes 10 residues from the N-terminus. Conformational trapping of the remaining peptide forces the enzyme to release this intermediate rather than proceed to macrocyclization. The enzyme rebinds the remaining peptide in a different conformation and catalyzes macrocyclization of the N-terminal 7 residues.

Functionally, major toxin that belongs to the bicyclic heptapeptides called phallotoxins. Although structurally related to amatoxins, phallotoxins have a different mode of action, which is the stabilization of F-actin. Phallotoxins are poisonous when administered parenterally, but not orally because of poor absorption. The polypeptide is Phallacidin proprotein 1 (Amanita bisporigera (Destroying angel)).